The chain runs to 181 residues: MMRLKEKYTQNIKPALVKEFDIKNPMLIPFIEKVVISVGAGELAKDQKVLQNVADTISLIAGQKAVITKAKKSVAGFKVREGFPVGVMVTLRKDNMYAFLDKLITIALPRVKDFRGLPRDGFDGRGNYNFGLDEQLMFPEVEYDKILRTHGMNISIVTTAKSDKEAQKLLELFGVPFAKGK.

It belongs to the universal ribosomal protein uL5 family. Part of the 50S ribosomal subunit; part of the 5S rRNA/L5/L18/L25 subcomplex. Contacts the 5S rRNA and the P site tRNA. Forms a bridge to the 30S subunit in the 70S ribosome.

Functionally, this is one of the proteins that bind and probably mediate the attachment of the 5S RNA into the large ribosomal subunit, where it forms part of the central protuberance. In the 70S ribosome it contacts protein S13 of the 30S subunit (bridge B1b), connecting the 2 subunits; this bridge is implicated in subunit movement. Contacts the P site tRNA; the 5S rRNA and some of its associated proteins might help stabilize positioning of ribosome-bound tRNAs. In Campylobacter lari (strain RM2100 / D67 / ATCC BAA-1060), this protein is Large ribosomal subunit protein uL5.